The following is a 993-amino-acid chain: DNA-binding protein SMUBP-2 (993 aa).

A2 carries the N-acetylalanine modification. Residues G213–T220, Q402, Y441, and E570 each bind ATP. The tract at residues T637–R783 is SS DNA-binding. 3 disordered regions span residues Y650 to R723, L765 to T815, and R837 to V872. 2 stretches are compositionally biased toward polar residues: residues P667 to E683 and H703 to D716. The 64-residue stretch at P721 to S784 folds into the R3H domain. The span at L765 to A775 shows a compositional bias: basic and acidic residues. Residues S784–Q794 are compositionally biased toward low complexity. A phosphoserine mark is found at S797 and S800. The segment covering R837 to K847 has biased composition (polar residues). A Nuclear localization signal motif is present at residues K862–K866. The AN1-type; degenerate zinc-finger motif lies at V889–A938. 4 residues coordinate Zn(2+): C911, C914, H928, and C930. The interval G953 to T993 is disordered. A compositionally biased stretch (basic and acidic residues) spans T954 to G976.

The protein belongs to the DNA2/NAM7 helicase family. As to quaternary structure, homooligomer. Interacts with RUVBL1. Interacts with RUVBL2. Interacts with GTF3C1. Interacts with ABT1. Interacts with ribosomes. In all tissues examined.

It is found in the nucleus. It localises to the cytoplasm. Its subcellular location is the cell projection. The protein localises to the axon. It carries out the reaction ATP + H2O = ADP + phosphate + H(+). In terms of biological role, 5' to 3' helicase that unwinds RNA and DNA duplexes in an ATP-dependent reaction. Specific to 5'-phosphorylated single-stranded guanine-rich sequences. May play a role in RNA metabolism, ribosome biogenesis or initiation of translation. May play a role in regulation of transcription. Interacts with tRNA-Tyr. This Mus musculus (Mouse) protein is DNA-binding protein SMUBP-2 (Ighmbp2).